The chain runs to 187 residues: Imidazoleglycerol-phosphate dehydratase (187 aa).

This sequence belongs to the imidazoleglycerol-phosphate dehydratase family.

The protein localises to the cytoplasm. The catalysed reaction is D-erythro-1-(imidazol-4-yl)glycerol 3-phosphate = 3-(imidazol-4-yl)-2-oxopropyl phosphate + H2O. Its pathway is amino-acid biosynthesis; L-histidine biosynthesis; L-histidine from 5-phospho-alpha-D-ribose 1-diphosphate: step 6/9. The sequence is that of Imidazoleglycerol-phosphate dehydratase from Pyrobaculum calidifontis (strain DSM 21063 / JCM 11548 / VA1).